The sequence spans 205 residues: GTP cyclohydrolase-2 (205 aa).

49-53 (RLHSE) contributes to the GTP binding site. Cysteine 54, cysteine 65, and cysteine 67 together coordinate Zn(2+). GTP is bound by residues glutamine 70, 92–94 (EGR), and threonine 114. The active-site Proton acceptor is the aspartate 126. Arginine 128 functions as the Nucleophile in the catalytic mechanism. Threonine 149 and lysine 154 together coordinate GTP.

Belongs to the GTP cyclohydrolase II family. Zn(2+) is required as a cofactor.

It carries out the reaction GTP + 4 H2O = 2,5-diamino-6-hydroxy-4-(5-phosphoribosylamino)-pyrimidine + formate + 2 phosphate + 3 H(+). It functions in the pathway cofactor biosynthesis; riboflavin biosynthesis; 5-amino-6-(D-ribitylamino)uracil from GTP: step 1/4. In terms of biological role, catalyzes the conversion of GTP to 2,5-diamino-6-ribosylamino-4(3H)-pyrimidinone 5'-phosphate (DARP), formate and pyrophosphate. This is GTP cyclohydrolase-2 from Pseudomonas entomophila (strain L48).